Reading from the N-terminus, the 174-residue chain is Crossover junction endodeoxyribonuclease RuvC (174 aa).

Active-site residues include aspartate 16, glutamate 76, and aspartate 148. Residues aspartate 16, glutamate 76, and aspartate 148 each contribute to the Mg(2+) site.

It belongs to the RuvC family. Homodimer which binds Holliday junction (HJ) DNA. The HJ becomes 2-fold symmetrical on binding to RuvC with unstacked arms; it has a different conformation from HJ DNA in complex with RuvA. In the full resolvosome a probable DNA-RuvA(4)-RuvB(12)-RuvC(2) complex forms which resolves the HJ. It depends on Mg(2+) as a cofactor.

Its subcellular location is the cytoplasm. The catalysed reaction is Endonucleolytic cleavage at a junction such as a reciprocal single-stranded crossover between two homologous DNA duplexes (Holliday junction).. The RuvA-RuvB-RuvC complex processes Holliday junction (HJ) DNA during genetic recombination and DNA repair. Endonuclease that resolves HJ intermediates. Cleaves cruciform DNA by making single-stranded nicks across the HJ at symmetrical positions within the homologous arms, yielding a 5'-phosphate and a 3'-hydroxyl group; requires a central core of homology in the junction. The consensus cleavage sequence is 5'-(A/T)TT(C/G)-3'. Cleavage occurs on the 3'-side of the TT dinucleotide at the point of strand exchange. HJ branch migration catalyzed by RuvA-RuvB allows RuvC to scan DNA until it finds its consensus sequence, where it cleaves and resolves the cruciform DNA. This Rhodopseudomonas palustris (strain BisA53) protein is Crossover junction endodeoxyribonuclease RuvC.